We begin with the raw amino-acid sequence, 407 residues long: DNA primase DnaG (407 aa).

Residues 172–248 (DWIIVVEGRA…HIDYVARAPP (77 aa)) form the Toprim domain. Mg(2+) contacts are provided by Glu-178, Asp-222, and Asp-224. Residues 279–304 (AGAEKTEAAAPPPQQPTAPPAAPSQQ) are disordered. The segment covering 288–300 (APPPQQPTAPPAA) has biased composition (pro residues).

The protein belongs to the archaeal DnaG primase family. Forms a ternary complex with MCM helicase and DNA. Component of the archaeal exosome complex. Requires Mg(2+) as cofactor.

The catalysed reaction is ssDNA + n NTP = ssDNA/pppN(pN)n-1 hybrid + (n-1) diphosphate.. Functionally, RNA polymerase that catalyzes the synthesis of short RNA molecules used as primers for DNA polymerase during DNA replication. Also part of the exosome, which is a complex involved in RNA degradation. Acts as a poly(A)-binding protein that enhances the interaction between heteromeric, adenine-rich transcripts and the exosome. The polypeptide is DNA primase DnaG (Pyrobaculum calidifontis (strain DSM 21063 / JCM 11548 / VA1)).